Consider the following 302-residue polypeptide: NAD kinase 2 (302 aa).

The active-site Proton acceptor is D78. NAD(+) contacts are provided by residues 78–79 (DG), 152–153 (NE), D182, 193–198 (TAYALS), and A217.

Belongs to the NAD kinase family. Requires a divalent metal cation as cofactor.

The protein localises to the cytoplasm. It carries out the reaction NAD(+) + ATP = ADP + NADP(+) + H(+). In terms of biological role, involved in the regulation of the intracellular balance of NAD and NADP, and is a key enzyme in the biosynthesis of NADP. Catalyzes specifically the phosphorylation on 2'-hydroxyl of the adenosine moiety of NAD to yield NADP. This chain is NAD kinase 2, found in Parasynechococcus marenigrum (strain WH8102).